The primary structure comprises 143 residues: Ribosome-binding factor A (143 aa).

Residues 123–143 (DNSLQENYKDSDKETKVEKLR) form a disordered region.

It belongs to the RbfA family. As to quaternary structure, monomer. Binds 30S ribosomal subunits, but not 50S ribosomal subunits or 70S ribosomes.

Its subcellular location is the cytoplasm. In terms of biological role, one of several proteins that assist in the late maturation steps of the functional core of the 30S ribosomal subunit. Associates with free 30S ribosomal subunits (but not with 30S subunits that are part of 70S ribosomes or polysomes). Required for efficient processing of 16S rRNA. May interact with the 5'-terminal helix region of 16S rRNA. The chain is Ribosome-binding factor A from Francisella philomiragia subsp. philomiragia (strain ATCC 25017 / CCUG 19701 / FSC 153 / O#319-036).